The sequence spans 383 residues: ATP phosphoribosyltransferase regulatory subunit (383 aa).

Belongs to the class-II aminoacyl-tRNA synthetase family. HisZ subfamily. Heteromultimer composed of HisG and HisZ subunits.

It is found in the cytoplasm. Its pathway is amino-acid biosynthesis; L-histidine biosynthesis; L-histidine from 5-phospho-alpha-D-ribose 1-diphosphate: step 1/9. In terms of biological role, required for the first step of histidine biosynthesis. May allow the feedback regulation of ATP phosphoribosyltransferase activity by histidine. The protein is ATP phosphoribosyltransferase regulatory subunit of Paraburkholderia xenovorans (strain LB400).